A 619-amino-acid polypeptide reads, in one-letter code: Dihydroxy-acid dehydratase 1 (619 aa).

D81 is a binding site for Mg(2+). C122 is a binding site for [2Fe-2S] cluster. Residues D123 and K124 each coordinate Mg(2+). The residue at position 124 (K124) is an N6-carboxylysine. Residue C201 coordinates [2Fe-2S] cluster. E496 contacts Mg(2+). The active-site Proton acceptor is the S522.

It belongs to the IlvD/Edd family. In terms of assembly, homodimer. Requires [2Fe-2S] cluster as cofactor. Mg(2+) is required as a cofactor.

It carries out the reaction (2R)-2,3-dihydroxy-3-methylbutanoate = 3-methyl-2-oxobutanoate + H2O. The catalysed reaction is (2R,3R)-2,3-dihydroxy-3-methylpentanoate = (S)-3-methyl-2-oxopentanoate + H2O. It functions in the pathway amino-acid biosynthesis; L-isoleucine biosynthesis; L-isoleucine from 2-oxobutanoate: step 3/4. The protein operates within amino-acid biosynthesis; L-valine biosynthesis; L-valine from pyruvate: step 3/4. Its function is as follows. Functions in the biosynthesis of branched-chain amino acids. Catalyzes the dehydration of (2R,3R)-2,3-dihydroxy-3-methylpentanoate (2,3-dihydroxy-3-methylvalerate) into 2-oxo-3-methylpentanoate (2-oxo-3-methylvalerate) and of (2R)-2,3-dihydroxy-3-methylbutanoate (2,3-dihydroxyisovalerate) into 2-oxo-3-methylbutanoate (2-oxoisovalerate), the penultimate precursor to L-isoleucine and L-valine, respectively. The chain is Dihydroxy-acid dehydratase 1 from Burkholderia lata (strain ATCC 17760 / DSM 23089 / LMG 22485 / NCIMB 9086 / R18194 / 383).